The following is a 212-amino-acid chain: Proteasome subunit beta type-2 (212 aa).

This sequence belongs to the peptidase T1B family. As to quaternary structure, the 26S proteasome consists of a 20S proteasome core and two 19S regulatory subunits. The 20S proteasome core is composed of 28 subunits that are arranged in four stacked rings, resulting in a barrel-shaped structure. The two end rings are each formed by seven alpha subunits, and the two central rings are each formed by seven beta subunits. The catalytic chamber with the active sites is on the inside of the barrel.

Its subcellular location is the cytoplasm. The protein localises to the nucleus. Non-catalytic component of the proteasome, a multicatalytic proteinase complex which is characterized by its ability to cleave peptides with Arg, Phe, Tyr, Leu, and Glu adjacent to the leaving group at neutral or slightly basic pH. The proteasome has an ATP-dependent proteolytic activity. This is Proteasome subunit beta type-2 (PBD1) from Oryza sativa subsp. japonica (Rice).